We begin with the raw amino-acid sequence, 139 residues long: Peptide methionine sulfoxide reductase MsrB (139 aa).

Residues 9–131 (TPSDNTELTE…NSASLSFIDD (123 aa)) form the MsrB domain. Cysteine 48, cysteine 51, cysteine 97, and cysteine 100 together coordinate Zn(2+). Residue cysteine 120 is the Nucleophile of the active site.

This sequence belongs to the MsrB Met sulfoxide reductase family. Zn(2+) is required as a cofactor.

It catalyses the reaction L-methionyl-[protein] + [thioredoxin]-disulfide + H2O = L-methionyl-(R)-S-oxide-[protein] + [thioredoxin]-dithiol. The chain is Peptide methionine sulfoxide reductase MsrB from Pectobacterium carotovorum subsp. carotovorum (strain PC1).